A 371-amino-acid polypeptide reads, in one-letter code: Transaldolase (371 aa).

Lysine 140 (schiff-base intermediate with substrate) is an active-site residue.

This sequence belongs to the transaldolase family. Type 2 subfamily.

It is found in the cytoplasm. The catalysed reaction is D-sedoheptulose 7-phosphate + D-glyceraldehyde 3-phosphate = D-erythrose 4-phosphate + beta-D-fructose 6-phosphate. It functions in the pathway carbohydrate degradation; pentose phosphate pathway; D-glyceraldehyde 3-phosphate and beta-D-fructose 6-phosphate from D-ribose 5-phosphate and D-xylulose 5-phosphate (non-oxidative stage): step 2/3. Transaldolase is important for the balance of metabolites in the pentose-phosphate pathway. In Arthrobacter sp. (strain FB24), this protein is Transaldolase.